The sequence spans 1522 residues: MTWAGDVEEQDDYFSCSDVSTSGDRRKRAPQTVTQEEVDQATSKIANEGQLSIRDILASQDTAVRITNPRDYQMELFLRAKMQNTIAVLDTGTGKTHIATLLLRHVLEEELENRAKGCAHKMAFFLVDSVNLVFQQANVLRCGLDQGVEGISGAMGQSLFQKQTWDKLFAVNMVIVCTAQVLVDCMMHSFMSISRMNLLIFDEAHHAKSNHPYARVMKDYYAHELDTSKRPRIFAMTASPVDVKGQSAEHVREAARELETLLHSRIATTSDSALARNSITRPEEEVAVYTRLRNEFETPLHQKVKAKYGDVAPFRKLFITAKLHASELGRWASDMYWSFAFADEQSRKLQIREELKYNRSKRDWSAAELDAQMARLKEATAFVQQYEIGAPTLSEQDLSSKVMKLQYWLNLYYERTTLARCIVFVEKRHTAQLLKLIFDHIGGPNLHCDVLVGINNRAGEENVSLRSQILTLQKFRRGELNCLFATSVAEEGLDIPQCNLVVRFDLYRTMIGYVQSRGRARHRNSKYLHMLEAENKEHTERLMNARHDENIMREFCKDLTHDRQLGDVEQEKAELIALEDKLFPSYTDEKSGAKLTYRSSLSILSHFVATYPSPDHNTMAQPTYVVNPKISDDPRDPQRNGFVCEVILPEHCPIISMVGQVYSRKTIAKCSAAFKMCIELRRKDHLNEFLLPTISKYLPAMRNALLAVSEKKKGNYAMVIKPTFWKQDRDTVPESLHLTIIDADRGLDRPHQPLAMLTRRPFPQLPSFPIYLTDCRPSNIVSQSLHIPISLTPELLEMFTRFTLRIFEDIYNKVYDYDVSKMSYWMLPVIEHRVASVRSMSNPQEVLDMDQIRKVYNEPFWKWSPQSRTDDLIDRYFVDPMNGGRRYYSDRLAPHLKPQDPVPANVPRQNHKFMKNILDFSDSKWMKSRDITRWHQDQPVLQVEKIPFRRNHLANVEDKEKKELANLETYICPEPLHISNLATPFVVMCYVLPAIIHRFESYLIALDACDVLDLKVSPALALEALTKDSDNSEEHGEEKINFKSGMGPNYERLEFLGDCFLKVATSLSVFVQQPEENEFEFHVRRMLMLCNQNLMETAVGKKKLYKYVRTDAFSRRNWYPEGLKLLRGKGLKKTEEDWLNVTHNLGDKSVADVCEAFIGAAFMQHHKGGQWTPNDWDEAVKAVKLFANSDDHLMEKWTDYYAAYTKPKYQTAGATATQLDLAHKIEMKHPYRFRYPRLLRSAFIHPSQPFMWENIPSYQRLEFLGDSLLDMAFIMHLFYKYPDKDPQWLTEHKTPMVSNKFLGAVCVKLGWHTHMKQNTAILSSQIRDYVYEVEEAEREANGAVDYWVSVSEPPKCLADVIEAFVAAIFVDSEFDFNVVQKFFDLHLKPFFLDMTLDAYENFASNHPTTRLSRLLSINFGCSEWRMGALETETLIPGKGKAIAAMVMIHDKVHFHSLGQSGRYARVRASHAALEKLEGLPPYEFRSKYGCDCVDEGEGEAGVDEAAVSKKVELMREAIGPSI.

Positions M1–D12 are enriched in acidic residues. Residues M1 to E37 form a disordered region. Positions L76–L258 constitute a Helicase ATP-binding domain. L89–T96 contacts ATP. Residues D202 to H205 carry the DEAH box motif. The Helicase C-terminal domain occupies W408 to I576. A Dicer dsRNA-binding fold domain is found at S600 to A700. Residues P859–N980 form the PAZ domain. RNase III domains are found at residues I995–H1166 and A1222–E1373. Residues E1262, D1359, and E1362 each coordinate Mg(2+). The DRBM domain occupies T1409 to G1478. C1421, H1449, C1490, and C1492 together coordinate Zn(2+).

Belongs to the helicase family. Dicer subfamily. The cofactor is Mg(2+). It depends on Mn(2+) as a cofactor.

Functionally, dicer-like endonuclease involved in cleaving double-stranded RNA in the RNA interference (RNAi) pathway. Produces 21 to 25 bp dsRNAs (siRNAs) which target the selective destruction of homologous RNAs leading to sequence-specific suppression of gene expression, called post-transcriptional gene silencing (PTGS). Part of a broad host defense response against viral infection and transposons. This chain is Dicer-like protein 1 (DCL1), found in Phaeosphaeria nodorum (strain SN15 / ATCC MYA-4574 / FGSC 10173) (Glume blotch fungus).